The chain runs to 361 residues: Transposase A from transposon Tn554 (361 aa).

In terms of domain architecture, Core-binding (CB) spans 23-120 (YQLIEPVMKF…VVMSFLDYLS (98 aa)). The Tyr recombinase domain maps to 163 to 351 (KQIRTLRSKE…SDQDMKNEFN (189 aa)). Active-site residues include arginine 198, lysine 232, histidine 302, arginine 305, and histidine 328. Tyrosine 338 (O-(3'-phospho-DNA)-tyrosine intermediate) is an active-site residue.

Belongs to the 'phage' integrase family.

Its function is as follows. One of three proteins encoded by transposon Tn554 required for its transposition. The chain is Transposase A from transposon Tn554 (tnpA1) from Staphylococcus aureus (strain Mu50 / ATCC 700699).